A 228-amino-acid polypeptide reads, in one-letter code: Large ribosomal subunit protein uL16 (228 aa).

It belongs to the universal ribosomal protein uL16 family. In terms of assembly, component of the small ribosomal subunit. Mature ribosomes consist of a small (40S) and a large (60S) subunit. The 40S subunit contains about 33 different proteins and 1 molecule of RNA (18S). The 60S subunit contains about 49 different proteins and 3 molecules of RNA (25S, 5.8S and 5S).

The sequence is that of Large ribosomal subunit protein uL16 (RPL10) from Pinus taeda (Loblolly pine).